Reading from the N-terminus, the 317-residue chain is Ubiquinone biosynthesis protein COQ9, mitochondrial (317 aa).

A mitochondrion-targeting transit peptide spans 1–46 (MAASVARVLKAAGGRQLLLMVARRRPVLRQPFLLMPRKFWGTSALR). The disordered stretch occupies residues 45–97 (LRSEDQKQPPFSSTSAHAGTPEHAEEQYQQQQPPPRYTDQAGEESEGYESEEQ). A compositionally biased stretch (acidic residues) spans 85 to 96 (AGEESEGYESEE). R243 contacts a 1,2-diacylglycero-3-phosphoethanolamine.

This sequence belongs to the COQ9 family. Homodimer. Heterodimer; two heterodimers of COQ7:COQ9 come together on the same side of the lipid pseudo-bilayer and form a curved tetramer with a hydrophobic surface suitable for membrane interaction. These two tetramers assemble into a soluble octamer with a pseudo-bilayer of lipids captured within. Interacts with COQ7; this interaction allows ubiquinone (CoQ) isoprene intermediates presentation to COQ7 and facilitates the COQ7-mediated hydroxylase step.

The protein localises to the mitochondrion. The protein operates within cofactor biosynthesis; ubiquinone biosynthesis. Its function is as follows. Membrane-associated protein that warps the membrane surface to access and bind aromatic isoprenes with high specificity, including ubiquinone (CoQ) isoprene intermediates and presents them directly to COQ7, therefore facilitating the COQ7-mediated hydroxylase step. Participates in the biosynthesis of coenzyme Q, also named ubiquinone, an essential lipid-soluble electron transporter for aerobic cellular respiration. The polypeptide is Ubiquinone biosynthesis protein COQ9, mitochondrial (Xenopus tropicalis (Western clawed frog)).